Reading from the N-terminus, the 368-residue chain is Homoserine dehydrogenase (368 aa).

Residues V12, G14, and V15 each contribute to the NAD(+) site. Residue V15 participates in NADP(+) binding. Residues V15, K59, T95, S96, and K119 each coordinate NADPH. T95 provides a ligand contact to NAD(+). Residue T95 coordinates NADP(+). K119 is a binding site for NADP(+). Positions 146, 149, 151, and 153 each coordinate Na(+). NADP(+) contacts are provided by G209 and E212. Residues E212 and D223 each coordinate L-homoserine. K227 functions as the Proton donor in the catalytic mechanism. G349 lines the NAD(+) pocket. G349 serves as a coordination point for NADP(+). An NADPH-binding site is contributed by G349.

The protein belongs to the homoserine dehydrogenase family. A metal cation is required as a cofactor.

It carries out the reaction L-homoserine + NADP(+) = L-aspartate 4-semialdehyde + NADPH + H(+). The enzyme catalyses L-homoserine + NAD(+) = L-aspartate 4-semialdehyde + NADH + H(+). The protein operates within amino-acid biosynthesis; L-methionine biosynthesis via de novo pathway; L-homoserine from L-aspartate: step 3/3. It functions in the pathway amino-acid biosynthesis; L-threonine biosynthesis; L-threonine from L-aspartate: step 3/5. Functionally, catalyzes the conversion of L-aspartate-beta-semialdehyde (L-Asa) to L-homoserine (L-Hse), the third step in the biosynthesis of amino acids that derive from aspartate (the aspartate family of amino acids), including methioinine and threonine, the latter of which is a precursor to isoleucine; production of homoserine leads to a branch-point in the pathway as it can either be O-phosphorylated for processing to threonine, or O-acylated for processing to methionine. The sequence is that of Homoserine dehydrogenase from Emericella nidulans (strain FGSC A4 / ATCC 38163 / CBS 112.46 / NRRL 194 / M139) (Aspergillus nidulans).